Here is a 391-residue protein sequence, read N- to C-terminus: Phosphoprotein (391 aa).

Residues Thr10, Thr16, and Thr39 each carry the phosphothreonine modification. Residues 55-65 (KNIQYPTTSHQ) are compositionally biased toward polar residues. Residues 55-90 (KNIQYPTTSHQGSKSKGRGSGARPIIVSSSEGGTGG) form a disordered region. At Ser69 the chain carries Phosphoserine. Phosphothreonine occurs at positions 91, 150, and 165. Residues 145–208 (TSTPVTEFKR…PQQDSTPANV (64 aa)) form a disordered region. Ser188 carries the post-translational modification Phosphoserine. The tract at residues 216–279 (ISANEIMDLL…MATVKIMDPG (64 aa)) is multimerization. Residues 218–245 (ANEIMDLLRGMDARLQHLEQKVDKVLAQ) are a coiled coil. Thr250 carries the post-translational modification Phosphothreonine. Ser257 carries the phosphoserine modification. Phosphothreonine is present on residues Thr258 and Thr282. Ser292 and Ser294 each carry phosphoserine. Thr298 bears the Phosphothreonine mark. Phosphoserine is present on residues Ser301 and Ser374. The segment at 343–391 (AGRKVMITKMITDCVANPQMKQVFEQRLAKASTEDALNDIKRDIIRSAI) is interaction with the nucleoprotein. Thr375 is modified (phosphothreonine).

It belongs to the rubulavirus/avulavirus P protein family. As to quaternary structure, homotetramer. Interacts (via multimerization domain) with polymerase L; this interaction forms the polymerase L-P complex. Interacts (via N-terminus) with N0 (via Ncore); this interaction allows P to chaperon N0 to avoid N polymerization before encapsidation. Interacts (via C-terminus) with N-RNA template; this interaction positions the polymerase on the template for both transcription and replication. Interacts with host RPS6KB1 kinase; this interaction may play a role in the viral replication and transcription.

Essential cofactor of the RNA polymerase L that plays a central role in the transcription and replication by forming the polymerase complex with RNA polymerase L and recruiting L to the genomic N-RNA template for RNA synthesis. Also plays a central role in the encapsidation of nascent RNA chains by forming the encapsidation complex with the nucleocapsid protein N (N-P complex). Acts as a chaperone for newly synthesized free N protein, so-called N0, allowing encapsidation of nascent RNA chains during replication. The nucleoprotein protein N prevents excessive phosphorylation of P, which leads to down-regulation of viral transcription/ replication. Participates, together with N, in the formation of viral factories (viroplasms), which are large inclusions in the host cytoplasm where replication takes place. In Mumps virus genotype B (strain Miyahara vaccine) (MuV), this protein is Phosphoprotein.